The following is an 85-amino-acid chain: ATP synthase subunit c (85 aa).

2 helical membrane passes run 10–30 and 53–73; these read IAVG…FAIL and FIIA…ALLF.

Belongs to the ATPase C chain family. As to quaternary structure, F-type ATPases have 2 components, F(1) - the catalytic core - and F(0) - the membrane proton channel. F(1) has five subunits: alpha(3), beta(3), gamma(1), delta(1), epsilon(1). F(0) has three main subunits: a(1), b(2) and c(10-14). The alpha and beta chains form an alternating ring which encloses part of the gamma chain. F(1) is attached to F(0) by a central stalk formed by the gamma and epsilon chains, while a peripheral stalk is formed by the delta and b chains.

The protein resides in the cell inner membrane. F(1)F(0) ATP synthase produces ATP from ADP in the presence of a proton or sodium gradient. F-type ATPases consist of two structural domains, F(1) containing the extramembraneous catalytic core and F(0) containing the membrane proton channel, linked together by a central stalk and a peripheral stalk. During catalysis, ATP synthesis in the catalytic domain of F(1) is coupled via a rotary mechanism of the central stalk subunits to proton translocation. Its function is as follows. Key component of the F(0) channel; it plays a direct role in translocation across the membrane. A homomeric c-ring of between 10-14 subunits forms the central stalk rotor element with the F(1) delta and epsilon subunits. The chain is ATP synthase subunit c from Aliivibrio salmonicida (strain LFI1238) (Vibrio salmonicida (strain LFI1238)).